A 451-amino-acid polypeptide reads, in one-letter code: Cysteine desulfurase (451 aa).

Residues alanine 121, threonine 122, glutamine 229, serine 249, and histidine 251 each contribute to the pyridoxal 5'-phosphate site. Position 252 is an N6-(pyridoxal phosphate)lysine (lysine 252). Threonine 289 is a binding site for pyridoxal 5'-phosphate. Cysteine 375 acts as the Cysteine persulfide intermediate in catalysis. A [2Fe-2S] cluster-binding site is contributed by cysteine 375. Residue cysteine 375 participates in Zn(2+) binding. Cysteine 375 is subject to Cysteine persulfide.

The protein belongs to the class-V pyridoxal-phosphate-dependent aminotransferase family. NifS/IscS subfamily. In terms of assembly, homodimer. Component of the mitochondrial core iron-sulfur cluster (ISC) complex composed of NFS1, LYRM4, NDUFAB1, ISCU, FXN, and FDX2; this complex is a heterohexamer containing two copies of each monomer. Component of cyteine desulfurase complex composed of NFS1, LYRM4 and NDUFAB1; this complex contributes to the activation of cysteine desulfurase activity and NFS1 stabilization. Interacts (homodimer form) with ISCU (D-state); each monomer interacts with the C-terminal regions of each NFS1 monomer. Interacts with HSPA9. Interacts (via homodimer form) with FDX2. Interacts (via homodimer form) with FXN. Interacts with LYRM4. Component of a complex composed of FXN, NFS1, LYRM4 and ISCU. As to quaternary structure, monomer. Homodimer. Oligomer. Interacts with ISCU. Component of the cysteine desulfurase complex composed of NFS1 and LYRM4; this complex contributes to the activation of cysteine desulfurase activity. Interacts with MOCS3. It depends on pyridoxal 5'-phosphate as a cofactor. In terms of processing, N-gluconoylated. Post-translationally, cysteine persulfide intermediate is reduced by thiol-containing molecules like glutathione and L-cysteine. Persulfide reduction is a rate-limiting step of cysteine desulfurase catalytic cycle.

The protein resides in the mitochondrion. Its subcellular location is the cytoplasm. The protein localises to the nucleus. It localises to the cytoskeleton. It is found in the microtubule organizing center. The protein resides in the centrosome. The catalysed reaction is (sulfur carrier)-H + L-cysteine = (sulfur carrier)-SH + L-alanine. The enzyme catalyses L-cysteinyl-[cysteine desulfurase] + L-cysteine = S-sulfanyl-L-cysteinyl-[cysteine desulfurase] + L-alanine. With respect to regulation, active only in complex with LYRM4. In terms of biological role, cysteine desulfurase, of the core iron-sulfur cluster (ISC) assembly complex, that catalyzes the desulfuration of L-cysteine to L-alanine, as component of the cysteine desulfurase complex leading to the formation of a cysteine persulfide intermediate at the active site cysteine residue and participates in the [2Fe-2S] clusters assembly on the scaffolding protein ISCU. The persulfide is then transferred on the flexible Cys loop from the catalytic site of NFS1 to the surface of NFS1. After the NFS1-linked persulfide sulfur is transferred to one of the conserved Cys residues of the scaffold, a reaction assisted by FXN. The core iron-sulfur cluster (ISC) assembly complex is involved in the de novo synthesis of a [2Fe-2S] cluster, the first step of the mitochondrial iron-sulfur protein biogenesis. This process is initiated by the cysteine desulfurase complex (NFS1:LYRM4:NDUFAB1) that produces persulfide which is delivered on the scaffold protein ISCU in a FXN-dependent manner. Then this complex is stabilized by FDX2 which provides reducing equivalents to accomplish the [2Fe-2S] cluster assembly. Finally, the [2Fe-2S] cluster is transferred from ISCU to chaperone proteins, including HSCB, HSPA9 and GLRX5. May catalyze the desulfuration of L-cysteine to L-alanine as component of the cysteine desulfurase complex (NFS1:LYRM4), leading to the formation of a cysteine persulfide intermediate. Acts as a sulfur donor for MOCS3 by transferring the sulfur of the cysteine persulfide intermediate on MOCS3. This chain is Cysteine desulfurase, found in Rattus norvegicus (Rat).